The chain runs to 108 residues: Competence protein ComGC (108 aa).

Positions 1–13 are cleaved as a signal peptide; the sequence is MKKMMTFLKKAKV. The segment at 14–39 is may be involved in polymerization of ComGC; the sequence is KAFTLVEMLVVLLIISVLFLLFVPNL. Phenylalanine 16 carries the post-translational modification N-methylphenylalanine. A helical transmembrane segment spans residues 16 to 36; it reads FTLVEMLVVLLIISVLFLLFV.

It belongs to the ComGC family. As to quaternary structure, the transformation pili are flexible filaments, consisting mainly of the major pilin ComGC and smaller amounts of the minor pilins, including at least ComGD, ComGF and ComGG, and perhaps ComGE. Homodimer. Forms higher-order multimers. Interacts with ComGG; the interaction is probably direct. Undergoes proteolytic cleavage.

It localises to the cell membrane. It is found in the cell surface. The protein localises to the fimbrium. Its subcellular location is the secreted. Functionally, major component of the type IV-like pilus (T4P) that plays a role in transformation. Transformation pili are dynamically extended and retracted, perhaps thereby promoting DNA uptake and transformation. Required for transformation. Required for DNA binding. The protein is Competence protein ComGC of Streptococcus pneumoniae (strain ATCC BAA-255 / R6).